The following is a 33-amino-acid chain: Alpha-amanitin proprotein (33 aa).

Residues 1-10 (MSDINATRLP) constitute a propeptide that is removed on maturation. At Ile-11 the chain carries (3R,4R)-4,5-dihydroxyisoleucine; in form alpha-amanitin. (3R,4S)-4-hydroxyisoleucine; in form gamma-amanitin is present on Ile-11. The segment at residues 11 to 18 (IWGIGCNP) is a cross-link (cyclopeptide (Ile-Pro)). A cross-link (2'-cysteinyl-6'-hydroxytryptophan sulfoxide (Trp-Cys)) is located at residues 12–16 (WGIGC). Residue Pro-18 is modified to 4-hydroxyproline. The propeptide occupies 19–33 (SVGDEVTALLASGEA).

The protein belongs to the MSDIN fungal toxin family. In terms of processing, processed by the macrocyclase-peptidase enzyme POPB to yield a toxic cyclic decapeptide. POPB first removes 10 residues from the N-terminus. Conformational trapping of the remaining peptide forces the enzyme to release this intermediate rather than proceed to macrocyclization. The enzyme rebinds the remaining peptide in a different conformation and catalyzes macrocyclization of the N-terminal 8 residues.

Functionally, major toxin belonging to the bicyclic octapeptides amatoxins that acts by binding non-competitively to RNA polymerase II and greatly slowing the elongation of transcripts from target promoters. This is Alpha-amanitin proprotein from Amanita rimosa.